The sequence spans 656 residues: Nuclear pore complex protein Nup85 (656 aa).

Residue Met-1 is modified to N-acetylmethionine. Lys-92 is modified (N6-acetyllysine). Ser-223 carries the phosphoserine modification.

Belongs to the nucleoporin Nup85 family. As to quaternary structure, component of the nuclear pore complex (NPC). Component of the NPC Nup107-160 subcomplex, consisting of at least NUP107, NUP98/Nup96, NUP160, NUP133, NUP85, NUP37, NUP43 and SEC13. Interacts with NUP160, NUP133 and SEC13. Interacts with NUP37, NUP107 and NUP43. Interacts with CCR2.

Its subcellular location is the nucleus. The protein resides in the nuclear pore complex. The protein localises to the chromosome. It is found in the centromere. It localises to the kinetochore. Its subcellular location is the cytoplasm. The protein resides in the cytoskeleton. The protein localises to the spindle. It is found in the nucleus membrane. Essential component of the nuclear pore complex (NPC) that seems to be required for NPC assembly and maintenance. As part of the NPC Nup107-160 subcomplex plays a role in RNA export and in tethering NUP96/Nup98 and NUP153 to the nucleus. The Nup107-160 complex seems to be required for spindle assembly during mitosis. NUP85 is required for membrane clustering of CCL2-activated CCR2. Seems to be involved in CCR2-mediated chemotaxis of monocytes and may link activated CCR2 to the phosphatidyl-inositol 3-kinase-Rac-lammellipodium protrusion cascade. Involved in nephrogenesis. The polypeptide is Nuclear pore complex protein Nup85 (NUP85) (Homo sapiens (Human)).